We begin with the raw amino-acid sequence, 155 residues long: Small ribosomal subunit protein eS19B (155 aa).

It belongs to the eukaryotic ribosomal protein eS19 family.

This chain is Small ribosomal subunit protein eS19B (RpS19b), found in Drosophila melanogaster (Fruit fly).